The sequence spans 312 residues: Lipoyl synthase (312 aa).

Over residues 1-10 (MNEAPAEKQK) the composition is skewed to basic and acidic residues. The disordered stretch occupies residues 1–20 (MNEAPAEKQKPQQGKRFSER). [4Fe-4S] cluster is bound by residues Cys-51, Cys-56, Cys-62, Cys-77, Cys-81, Cys-84, and Ser-290. The Radical SAM core domain maps to 63–280 (WSRKTATYLA…RSVGESLGLF (218 aa)).

This sequence belongs to the radical SAM superfamily. Lipoyl synthase family. [4Fe-4S] cluster serves as cofactor.

Its subcellular location is the cytoplasm. It carries out the reaction [[Fe-S] cluster scaffold protein carrying a second [4Fe-4S](2+) cluster] + N(6)-octanoyl-L-lysyl-[protein] + 2 oxidized [2Fe-2S]-[ferredoxin] + 2 S-adenosyl-L-methionine + 4 H(+) = [[Fe-S] cluster scaffold protein] + N(6)-[(R)-dihydrolipoyl]-L-lysyl-[protein] + 4 Fe(3+) + 2 hydrogen sulfide + 2 5'-deoxyadenosine + 2 L-methionine + 2 reduced [2Fe-2S]-[ferredoxin]. Its pathway is protein modification; protein lipoylation via endogenous pathway; protein N(6)-(lipoyl)lysine from octanoyl-[acyl-carrier-protein]: step 2/2. Its function is as follows. Catalyzes the radical-mediated insertion of two sulfur atoms into the C-6 and C-8 positions of the octanoyl moiety bound to the lipoyl domains of lipoate-dependent enzymes, thereby converting the octanoylated domains into lipoylated derivatives. The sequence is that of Lipoyl synthase from Chlamydia felis (strain Fe/C-56) (Chlamydophila felis).